The following is a 380-amino-acid chain: Homoserine O-acetyltransferase (380 aa).

Positions 70–366 constitute an AB hydrolase-1 domain; sequence NAVLVFHALT…SPHGHDAFLI (297 aa). Catalysis depends on serine 186, which acts as the Nucleophile. Arginine 250 contacts substrate. Residues aspartate 333 and histidine 361 contribute to the active site. Aspartate 362 provides a ligand contact to substrate.

Belongs to the AB hydrolase superfamily. MetX family. As to quaternary structure, homodimer.

It is found in the cytoplasm. It carries out the reaction L-homoserine + acetyl-CoA = O-acetyl-L-homoserine + CoA. The protein operates within amino-acid biosynthesis; L-methionine biosynthesis via de novo pathway; O-acetyl-L-homoserine from L-homoserine: step 1/1. Transfers an acetyl group from acetyl-CoA to L-homoserine, forming acetyl-L-homoserine. The polypeptide is Homoserine O-acetyltransferase (Thermus thermophilus (strain ATCC BAA-163 / DSM 7039 / HB27)).